The chain runs to 348 residues: 4-hydroxy-2-oxovalerate aldolase 3 (348 aa).

Residues 8–260 (ITVHDMTLRD…ETGVDVWKIQ (253 aa)) form the Pyruvate carboxyltransferase domain. 16 to 17 (RD) provides a ligand contact to substrate. Position 17 (Asp17) interacts with Mn(2+). The active-site Proton acceptor is His20. Ser170 and His199 together coordinate substrate. Mn(2+) contacts are provided by His199 and His201. Substrate is bound at residue Tyr290.

The protein belongs to the 4-hydroxy-2-oxovalerate aldolase family.

It carries out the reaction (S)-4-hydroxy-2-oxopentanoate = acetaldehyde + pyruvate. This Burkholderia lata (strain ATCC 17760 / DSM 23089 / LMG 22485 / NCIMB 9086 / R18194 / 383) protein is 4-hydroxy-2-oxovalerate aldolase 3.